A 381-amino-acid polypeptide reads, in one-letter code: Arogenate dehydratase/prephenate dehydratase 2, chloroplastic (381 aa).

The tract at residues 1-32 is disordered; it reads MAMHTVRLSPATQLHGGISSNLSPPNRKPNNS. The transit peptide at 1-66 directs the protein to the chloroplast; the sequence is MAMHTVRLSP…DANGRDNSVR (66 aa). A compositionally biased stretch (polar residues) spans 18–32; it reads ISSNLSPPNRKPNNS. Positions 100-275 constitute a Prephenate dehydratase domain; the sequence is RVAYQGVRGA…NVTRFLMLAR (176 aa). The ACT domain maps to 289 to 375; it reads SIVFSLEEGP…TFLRVLGSYP (87 aa).

Expressed in roots, leaves, stems, flowers and siliques. Most abundant in leaves and seeds.

Its subcellular location is the plastid. The protein resides in the chloroplast stroma. It carries out the reaction L-arogenate + H(+) = L-phenylalanine + CO2 + H2O. The catalysed reaction is prephenate + H(+) = 3-phenylpyruvate + CO2 + H2O. It participates in amino-acid biosynthesis; L-phenylalanine biosynthesis; L-phenylalanine from L-arogenate: step 1/1. It functions in the pathway amino-acid biosynthesis; L-phenylalanine biosynthesis; phenylpyruvate from prephenate: step 1/1. In terms of biological role, converts the prephenate produced from the shikimate-chorismate pathway into phenylalanine. Dehydratase that uses arogenate and prephenate as substrates. Utilzes more efficiently arogenate than prephenate. Required for chloroplast division prior to ARC5, but in an ARC3- and ARC6-dependent manner, especially involved in the Z-ring formation. The chain is Arogenate dehydratase/prephenate dehydratase 2, chloroplastic from Arabidopsis thaliana (Mouse-ear cress).